A 104-amino-acid polypeptide reads, in one-letter code: Large ribosomal subunit protein uL24 (104 aa).

The protein belongs to the universal ribosomal protein uL24 family. In terms of assembly, part of the 50S ribosomal subunit.

One of two assembly initiator proteins, it binds directly to the 5'-end of the 23S rRNA, where it nucleates assembly of the 50S subunit. Functionally, one of the proteins that surrounds the polypeptide exit tunnel on the outside of the subunit. The chain is Large ribosomal subunit protein uL24 from Neorickettsia sennetsu (strain ATCC VR-367 / Miyayama) (Ehrlichia sennetsu).